We begin with the raw amino-acid sequence, 282 residues long: Pantothenate synthetase (282 aa).

30 to 37 (MGYYHAGH) serves as a coordination point for ATP. The Proton donor role is filled by His37. Gln61 is a (R)-pantoate binding site. Gln61 contacts beta-alanine. 147–150 (GQKD) lines the ATP pocket. Gln153 provides a ligand contact to (R)-pantoate. ATP is bound by residues Val176 and 184 to 187 (LSSR).

It belongs to the pantothenate synthetase family. Homodimer.

The protein localises to the cytoplasm. It carries out the reaction (R)-pantoate + beta-alanine + ATP = (R)-pantothenate + AMP + diphosphate + H(+). The protein operates within cofactor biosynthesis; (R)-pantothenate biosynthesis; (R)-pantothenate from (R)-pantoate and beta-alanine: step 1/1. Its function is as follows. Catalyzes the condensation of pantoate with beta-alanine in an ATP-dependent reaction via a pantoyl-adenylate intermediate. The chain is Pantothenate synthetase from Desulfovibrio desulfuricans (strain ATCC 27774 / DSM 6949 / MB).